We begin with the raw amino-acid sequence, 943 residues long: Translation initiation factor IF-2 (943 aa).

The interval 46 to 359 (IKGMLSKQSA…MPQRKERPLP (314 aa)) is disordered. Over residues 57 to 76 (KAPSSQAAKTPAKAAKTSSA) the composition is skewed to low complexity. Composition is skewed to basic and acidic residues over residues 92–103 (SNDHADVAEHSQ) and 110–124 (AKQE…KTSD). The segment covering 130-141 (SKSTILRPRSTQ) has biased composition (polar residues). The span at 142–190 (TAHTNTNHNRGGNTASANNTANGRNSNRSNNNNNNRSANNANRSGNNNR) shows a compositional bias: low complexity. 3 stretches are compositionally biased toward basic and acidic residues: residues 191-205 (SNER…RFDN), 239-250 (ASERQQPKRQEA), and 259-271 (KRSE…RPRT). 2 stretches are compositionally biased toward low complexity: residues 289–299 (PAAAAPKPASA) and 315–330 (NFGR…GFNR). Residues 331–342 (NNRRNKKNKRRQ) show a composition bias toward basic residues. A compositionally biased stretch (basic and acidic residues) spans 346–358 (PKKEMPQRKERPL). The tr-type G domain maps to 444 to 613 (PRPPVVTIMG…LLEADVLELK (170 aa)). Positions 453–460 (GHVDHGKT) are G1. 453–460 (GHVDHGKT) contributes to the GTP binding site. The G2 stretch occupies residues 478–482 (GITQH). The G3 stretch occupies residues 499 to 502 (DTPG). GTP contacts are provided by residues 499 to 503 (DTPGH) and 553 to 556 (NKID). A G4 region spans residues 553–556 (NKID). Positions 589-591 (SAK) are G5.

The protein belongs to the TRAFAC class translation factor GTPase superfamily. Classic translation factor GTPase family. IF-2 subfamily.

The protein resides in the cytoplasm. One of the essential components for the initiation of protein synthesis. Protects formylmethionyl-tRNA from spontaneous hydrolysis and promotes its binding to the 30S ribosomal subunits. Also involved in the hydrolysis of GTP during the formation of the 70S ribosomal complex. The chain is Translation initiation factor IF-2 from Lacticaseibacillus casei (strain BL23) (Lactobacillus casei).